Consider the following 292-residue polypeptide: NAD kinase (292 aa).

Catalysis depends on D73, which acts as the Proton acceptor. NAD(+) contacts are provided by residues 73–74 (DG), 147–148 (NE), H158, R175, D177, 188–193 (TAYSLS), and Q247.

It belongs to the NAD kinase family. Requires a divalent metal cation as cofactor.

The protein localises to the cytoplasm. It catalyses the reaction NAD(+) + ATP = ADP + NADP(+) + H(+). In terms of biological role, involved in the regulation of the intracellular balance of NAD and NADP, and is a key enzyme in the biosynthesis of NADP. Catalyzes specifically the phosphorylation on 2'-hydroxyl of the adenosine moiety of NAD to yield NADP. The sequence is that of NAD kinase from Serratia proteamaculans (strain 568).